We begin with the raw amino-acid sequence, 150 residues long: Endoribonuclease YbeY (150 aa).

Zn(2+) is bound by residues H102, H106, and H112.

Belongs to the endoribonuclease YbeY family. Zn(2+) is required as a cofactor.

The protein localises to the cytoplasm. Functionally, single strand-specific metallo-endoribonuclease involved in late-stage 70S ribosome quality control and in maturation of the 3' terminus of the 16S rRNA. The chain is Endoribonuclease YbeY from Thermotoga maritima (strain ATCC 43589 / DSM 3109 / JCM 10099 / NBRC 100826 / MSB8).